The sequence spans 433 residues: Glucoside xylosyltransferase 1 (433 aa).

Topologically, residues 1–6 are cytoplasmic; that stretch reads MRRFAR. A helical; Signal-anchor for type II membrane protein membrane pass occupies residues 7–29; the sequence is VALLFLGCGVCSLLYGVSQLALS. At 30-433 the chain is on the lumenal side; it reads LEQEAGGARQ…DLSVRRSKGS (404 aa). Positions 39-64 are disordered; the sequence is QRQARESAAPGGGRQAGSADGGEEGA. Residues N69, N166, N271, N305, and N380 are each glycosylated (N-linked (GlcNAc...) asparagine).

The protein belongs to the glycosyltransferase 8 family.

It localises to the membrane. The enzyme catalyses 3-O-(beta-D-glucosyl)-L-seryl-[EGF-like domain protein] + UDP-alpha-D-xylose = 3-O-[alpha-D-xylosyl-(1-&gt;3)-beta-D-glucosyl]-L-seryl-[EGF-like domain protein] + UDP + H(+). Functionally, glycosyltransferase which elongates the O-linked glucose attached to EGF-like repeats in the extracellular domain of Notch proteins by catalyzing the addition of xylose. In Gallus gallus (Chicken), this protein is Glucoside xylosyltransferase 1 (GXYLT1).